Here is a 648-residue protein sequence, read N- to C-terminus: Acetyl-coenzyme A synthetase (648 aa).

CoA-binding positions include R190–K193, T308, and N332. Residues G384–P386, D408–T413, D497, and R512 contribute to the ATP site. Position 520 (S520) interacts with CoA. R523 is a binding site for ATP. 3 residues coordinate Mg(2+): V534, H536, and V539. R581 is a binding site for CoA. Position 606 is an N6-acetyllysine (K606).

Belongs to the ATP-dependent AMP-binding enzyme family. Requires Mg(2+) as cofactor. Post-translationally, acetylated. Deacetylation by the SIR2-homolog deacetylase activates the enzyme.

It catalyses the reaction acetate + ATP + CoA = acetyl-CoA + AMP + diphosphate. Its function is as follows. Catalyzes the conversion of acetate into acetyl-CoA (AcCoA), an essential intermediate at the junction of anabolic and catabolic pathways. AcsA undergoes a two-step reaction. In the first half reaction, AcsA combines acetate with ATP to form acetyl-adenylate (AcAMP) intermediate. In the second half reaction, it can then transfer the acetyl group from AcAMP to the sulfhydryl group of CoA, forming the product AcCoA. The sequence is that of Acetyl-coenzyme A synthetase from Bradyrhizobium diazoefficiens (strain JCM 10833 / BCRC 13528 / IAM 13628 / NBRC 14792 / USDA 110).